The following is a 1511-amino-acid chain: Bifunctional glutamate/proline--tRNA ligase (1511 aa).

The glutamate--tRNA ligase stretch occupies residues 164 to 758 (GTKWDVSENK…SSVLYNRVAA (595 aa)). A 'HIGH' region motif is present at residues 204 to 214 (PEASGYLHIGH). The disordered stretch occupies residues 296–315 (AEQMKAEREQRAESKHRQNS). Over residues 299–315 (MKAEREQRAESKHRQNS) the composition is skewed to basic and acidic residues. K300 is modified (N6-acetyllysine; alternate). An N6-malonyllysine; alternate modification is found at K300. T355 is subject to Phosphothreonine. K417 is modified (N6-acetyllysine). The 'KMSKS' region signature appears at 432–436 (VLSKR). S434 is subject to Phosphoserine. Residues K498, K535, K542, and K637 each carry the N6-acetyllysine modification. The span at 708 to 728 (KEMPTSGSKEKTKAEPLKKET) shows a compositional bias: basic and acidic residues. Residues 708-741 (KEMPTSGSKEKTKAEPLKKETSSAPKEGPVPAVS) are disordered. At S746 the chain carries Phosphoserine. Residues 748–804 (ESSVLYNRVAAQGDVVRELKAKKAAKEDVDAAVKQLLALKAEYKQKTGQEYKPGNPP) form the WHEP-TRS 1 domain. The interval 759 to 955 (QGDVVRELKA…GIEYKPVSAT (197 aa)) is 3 X 57 AA approximate repeats. K787 bears the N6-acetyllysine mark. Residues 794 to 823 (TGQEYKPGNPPSAAAQSASTKSLPSAGEDR) are disordered. A compositionally biased stretch (polar residues) spans 807-816 (AAQSASTKSL). The WHEP-TRS 2 domain occupies 821–877 (EDRSLYDKIAAQGEVVRKLKAEKAPKAKVTEAVECLLSLKAEYKEKTGKEYVPGQPP). K860 bears the N6-acetyllysine mark. Disordered regions lie at residues 868-903 (GKEY…AKAL) and 952-1015 (VSAT…RLGL). Y871 carries the phosphotyrosine modification. Positions 877–890 (PASQKSQPSPASKA) are enriched in low complexity. S885 bears the Phosphoserine; by CDK5 mark. Residue T897 is modified to Phosphothreonine. The WHEP-TRS 3 domain occupies 899-955 (EAKALFDRVACQGEVVRKLKAEKASKDQVDPAVQELLQLKAQYKSLTGIEYKPVSAT). The span at 957–975 (SEDKDKKKKEKENKSEKQN) shows a compositional bias: basic and acidic residues. Positions 992–1005 (QGGGLSSSGAGEGQ) are enriched in gly residues. S997 is subject to Phosphoserine. S998 carries the post-translational modification Phosphoserine; by RPS6KB1. A Phosphoserine modification is found at S999. Residues 1006–1511 (GPKKQTRLGL…KFYTLFGRSY (506 aa)) form a proline--tRNA ligase region. Residues 1120–1122 (TSE) and R1151 each bind L-proline. R1151, E1153, R1162, T1163, Q1236, and T1239 together coordinate ATP. R1151 bears the Omega-N-methylarginine mark. Residue Q1236 coordinates Mg(2+). Residue H1241 participates in L-proline binding. ATP is bound by residues T1275 and R1277. The residue at position 1349 (S1349) is a Phosphoserine. Residues C1447, C1452, C1494, and C1496 each contribute to the Zn(2+) site. Position 1502 is an N6-acetyllysine (K1502).

The protein in the N-terminal section; belongs to the class-I aminoacyl-tRNA synthetase family. Glutamate--tRNA ligase type 2 subfamily. It in the C-terminal section; belongs to the class-II aminoacyl-tRNA synthetase family. In terms of assembly, homodimer. Part of the aminoacyl-tRNA synthetase multienzyme complex, also know as multisynthetase complex, that is composed of the tRNA ligases for Arg (RARS1), Asp (DARS1), Gln (QARS1), Ile (IARS1), Leu (LARS1), Lys (KARS1), Met (MARS1) the bifunctional ligase for Glu and Pro (EPRS1) and the auxiliary subunits AIMP1/p43, AIMP2/p38 and EEF1E1/p18. Forms a linear complex that contains MARS1, EEF1E1, EPRS1 and AIMP2 that is at the core of the multisubunit complex. Interacts with TARS3. Interacts with DUS2L. Component of the GAIT complex which is composed of EPRS1, RPL13A and GAPDH. Interacts (phosphorylated at Ser-998) with SLC27A1; mediates the translocation of SLC27A1 from the cytoplasm to the plasma membrane thereby increasing the uptake of long-chain fatty acids. In terms of processing, phosphorylated at Ser-998 by RPS6KB1; triggers EPRS1 release from the aminoacyl-tRNA synthetase multienzyme complex. In monocytes, the IFN-gamma-induced phosphorylation at Ser-998 releases EPRS1 from the aminoacyl-tRNA synthetase multienzyme complex, allowing its association with the GAIT complex. Phosphorylation at Ser-998 is specifically required for the RPL13A-mediated interaction of the GAIT complex with eIF4G. Phosphorylation at Ser-998 by RPS6KB1, is also induced by insulin through activation of the mTORC1 signaling pathway and promotes the interaction of EPRS1 with SLC27A1.

The protein localises to the cytoplasm. It localises to the cytosol. The protein resides in the membrane. It carries out the reaction tRNA(Glu) + L-glutamate + ATP = L-glutamyl-tRNA(Glu) + AMP + diphosphate. The enzyme catalyses tRNA(Pro) + L-proline + ATP = L-prolyl-tRNA(Pro) + AMP + diphosphate. Its function is as follows. Multifunctional protein which primarily functions within the aminoacyl-tRNA synthetase multienzyme complex, also known as multisynthetase complex. Within the complex it catalyzes the attachment of both L-glutamate and L-proline to their cognate tRNAs in a two-step reaction where the amino acid is first activated by ATP to form a covalent intermediate with AMP. Subsequently, the activated amino acid is transferred to the acceptor end of the cognate tRNA to form L-glutamyl-tRNA(Glu) and L-prolyl-tRNA(Pro). Upon interferon-gamma stimulation, EPRS1 undergoes phosphorylation, causing its dissociation from the aminoacyl-tRNA synthetase multienzyme complex. It is recruited to form the GAIT complex, which binds to stem loop-containing GAIT elements found in the 3'-UTR of various inflammatory mRNAs, such as ceruloplasmin. The GAIT complex inhibits the translation of these mRNAs, allowing interferon-gamma to redirect the function of EPRS1 from protein synthesis to translation inhibition in specific cell contexts. Furthermore, it can function as a downstream effector in the mTORC1 signaling pathway, by promoting the translocation of SLC27A1 from the cytoplasm to the plasma membrane where it mediates the uptake of long-chain fatty acid by adipocytes. Thereby, EPRS1 also plays a role in fat metabolism and more indirectly influences lifespan. This chain is Bifunctional glutamate/proline--tRNA ligase, found in Cricetulus griseus (Chinese hamster).